Here is a 490-residue protein sequence, read N- to C-terminus: GTPase Der (490 aa).

EngA-type G domains are found at residues 3–166 (PVVA…MDDV) and 203–376 (IKLA…DSST). GTP is bound by residues 9–16 (GRPNVGKS), 56–60 (DTGGI), 118–121 (NKTD), 209–216 (GRPNVGKS), 256–260 (DTAGV), and 321–324 (NKWD). One can recognise a KH-like domain in the interval 377-461 (RRVSTAMLTR…PIRIQFKEGE (85 aa)).

The protein belongs to the TRAFAC class TrmE-Era-EngA-EngB-Septin-like GTPase superfamily. EngA (Der) GTPase family. As to quaternary structure, associates with the 50S ribosomal subunit.

In terms of biological role, GTPase that plays an essential role in the late steps of ribosome biogenesis. The sequence is that of GTPase Der from Salmonella typhi.